Here is a 294-residue protein sequence, read N- to C-terminus: Cytidine deaminase (294 aa).

CMP/dCMP-type deaminase domains lie at 48-168 (DEDA…FGPK) and 186-294 (LTGD…VLLA). Substrate is bound at residue 89 to 91 (NME). Zn(2+) is bound at residue His-102. Glu-104 (proton donor) is an active-site residue. Zn(2+) is bound by residues Cys-129 and Cys-132.

It belongs to the cytidine and deoxycytidylate deaminase family. In terms of assembly, homodimer. Zn(2+) is required as a cofactor.

It carries out the reaction cytidine + H2O + H(+) = uridine + NH4(+). It catalyses the reaction 2'-deoxycytidine + H2O + H(+) = 2'-deoxyuridine + NH4(+). This enzyme scavenges exogenous and endogenous cytidine and 2'-deoxycytidine for UMP synthesis. This chain is Cytidine deaminase, found in Escherichia coli O139:H28 (strain E24377A / ETEC).